The chain runs to 278 residues: Elongation factor Ts (278 aa).

Positions 82 to 85 are involved in Mg(2+) ion dislocation from EF-Tu; that stretch reads TDFV.

This sequence belongs to the EF-Ts family.

The protein localises to the cytoplasm. Functionally, associates with the EF-Tu.GDP complex and induces the exchange of GDP to GTP. It remains bound to the aminoacyl-tRNA.EF-Tu.GTP complex up to the GTP hydrolysis stage on the ribosome. The sequence is that of Elongation factor Ts (tsf) from Streptomyces coelicolor (strain ATCC BAA-471 / A3(2) / M145).